Reading from the N-terminus, the 914-residue chain is Valine--tRNA ligase (914 aa).

Positions 45–55 match the 'HIGH' region motif; sequence PNVTGSLHMGH. Residues 538–542 carry the 'KMSKS' region motif; it reads KMSKS. Lys-541 serves as a coordination point for ATP. Residues 847 to 914 adopt a coiled-coil conformation; it reads LVDLDALKGR…LARKRLADLS (68 aa).

The protein belongs to the class-I aminoacyl-tRNA synthetase family. ValS type 1 subfamily. Monomer.

The protein localises to the cytoplasm. It carries out the reaction tRNA(Val) + L-valine + ATP = L-valyl-tRNA(Val) + AMP + diphosphate. In terms of biological role, catalyzes the attachment of valine to tRNA(Val). As ValRS can inadvertently accommodate and process structurally similar amino acids such as threonine, to avoid such errors, it has a 'posttransfer' editing activity that hydrolyzes mischarged Thr-tRNA(Val) in a tRNA-dependent manner. This Parasynechococcus marenigrum (strain WH8102) protein is Valine--tRNA ligase.